A 164-amino-acid chain; its full sequence is Transcription antitermination protein NusB (164 aa).

The protein belongs to the NusB family.

In terms of biological role, involved in transcription antitermination. Required for transcription of ribosomal RNA (rRNA) genes. Binds specifically to the boxA antiterminator sequence of the ribosomal RNA (rrn) operons. This Desulfovibrio desulfuricans (strain ATCC 27774 / DSM 6949 / MB) protein is Transcription antitermination protein NusB.